A 491-amino-acid polypeptide reads, in one-letter code: UDP-N-acetylmuramate--L-alanine ligase (491 aa).

126–132 (GTHGKTT) is a binding site for ATP.

Belongs to the MurCDEF family.

Its subcellular location is the cytoplasm. The enzyme catalyses UDP-N-acetyl-alpha-D-muramate + L-alanine + ATP = UDP-N-acetyl-alpha-D-muramoyl-L-alanine + ADP + phosphate + H(+). It functions in the pathway cell wall biogenesis; peptidoglycan biosynthesis. Functionally, cell wall formation. The sequence is that of UDP-N-acetylmuramate--L-alanine ligase from Salmonella agona (strain SL483).